Reading from the N-terminus, the 378-residue chain is UPF0754 membrane protein Bcer98_0694 (378 aa).

A helical membrane pass occupies residues 358–378 (LGALLGGTIGLMQGILLLFLM).

The protein belongs to the UPF0754 family.

Its subcellular location is the cell membrane. This chain is UPF0754 membrane protein Bcer98_0694, found in Bacillus cytotoxicus (strain DSM 22905 / CIP 110041 / 391-98 / NVH 391-98).